Reading from the N-terminus, the 363-residue chain is Pyrimidine monooxygenase RutA (363 aa).

FMN-binding positions include 49–50, asparagine 115, glutamate 124, 140–141, and serine 190; these read IK and RY.

Belongs to the NtaA/SnaA/DszA monooxygenase family. RutA subfamily.

It catalyses the reaction uracil + FMNH2 + NADH + O2 = (Z)-3-ureidoacrylate + FMN + NAD(+) + H2O + H(+). The enzyme catalyses thymine + FMNH2 + NADH + O2 = (Z)-2-methylureidoacrylate + FMN + NAD(+) + H2O + H(+). In terms of biological role, catalyzes the pyrimidine ring opening between N-3 and C-4 by an unusual flavin hydroperoxide-catalyzed mechanism, adding oxygen atoms in the process to yield ureidoacrylate peracid, that immediately reacts with FMN forming ureidoacrylate and FMN-N(5)-oxide. The FMN-N(5)-oxide reacts spontaneously with NADH to produce FMN. Requires the flavin reductase RutF to regenerate FMN in vivo. This chain is Pyrimidine monooxygenase RutA, found in Escherichia coli O6:K15:H31 (strain 536 / UPEC).